The following is a 212-amino-acid chain: Probable octanoyltransferase (212 aa).

One can recognise a BPL/LPL catalytic domain in the interval 28-199 (GVSEEMILVT…NLETLLQRQE (172 aa)). Substrate contacts are provided by residues 66-73 (RGGDATYH), 130-132 (SVG), and 143-145 (GVA). The active-site Acyl-thioester intermediate is Cys-161.

Belongs to the LipB family.

The protein localises to the cytoplasm. The catalysed reaction is octanoyl-[ACP] + L-lysyl-[protein] = N(6)-octanoyl-L-lysyl-[protein] + holo-[ACP] + H(+). Its pathway is protein modification; protein lipoylation via endogenous pathway; protein N(6)-(lipoyl)lysine from octanoyl-[acyl-carrier-protein]: step 1/2. Catalyzes the transfer of endogenously produced octanoic acid from octanoyl-acyl-carrier-protein onto the lipoyl domains of lipoate-dependent enzymes. Lipoyl-ACP can also act as a substrate although octanoyl-ACP is likely to be the physiological substrate. In Pyrobaculum arsenaticum (strain DSM 13514 / JCM 11321 / PZ6), this protein is Probable octanoyltransferase.